Here is a 968-residue protein sequence, read N- to C-terminus: RNA polymerase-associated protein RapA (968 aa).

Residues 164 to 334 (DVGRRHAPRV…FARLRLLDPN (171 aa)) enclose the Helicase ATP-binding domain. ATP is bound at residue 177-184 (DEVGLGKT). The DEAH box motif lies at 280–283 (DEAH). A Helicase C-terminal domain is found at 490-644 (RVEWLMGYLT…TCPTGRTIYD (155 aa)).

This sequence belongs to the SNF2/RAD54 helicase family. RapA subfamily. As to quaternary structure, interacts with the RNAP. Has a higher affinity for the core RNAP than for the holoenzyme. Its ATPase activity is stimulated by binding to RNAP.

Its function is as follows. Transcription regulator that activates transcription by stimulating RNA polymerase (RNAP) recycling in case of stress conditions such as supercoiled DNA or high salt concentrations. Probably acts by releasing the RNAP, when it is trapped or immobilized on tightly supercoiled DNA. Does not activate transcription on linear DNA. Probably not involved in DNA repair. This is RNA polymerase-associated protein RapA from Enterobacter sp. (strain 638).